Here is a 275-residue protein sequence, read N- to C-terminus: DNA-directed RNA polymerase subunit Rpo3 (275 aa).

The protein belongs to the archaeal Rpo3/eukaryotic RPB3 RNA polymerase subunit family. In terms of assembly, part of the RNA polymerase complex.

It is found in the cytoplasm. It catalyses the reaction RNA(n) + a ribonucleoside 5'-triphosphate = RNA(n+1) + diphosphate. DNA-dependent RNA polymerase (RNAP) catalyzes the transcription of DNA into RNA using the four ribonucleoside triphosphates as substrates. The protein is DNA-directed RNA polymerase subunit Rpo3 of Methanopyrus kandleri (strain AV19 / DSM 6324 / JCM 9639 / NBRC 100938).